A 205-amino-acid chain; its full sequence is Probable GTP-binding protein EngB (205 aa).

The 188-residue stretch at 8-195 (RDAEVVLIGR…NEAVRHHLHE (188 aa)) folds into the EngB-type G domain. GTP contacts are provided by residues 16–23 (GRSNVGKS), 41–45 (GVTRS), 60–63 (DLPG), 140–143 (NKMD), and 175–177 (ISA). Mg(2+) is bound by residues Ser23 and Thr43.

This sequence belongs to the TRAFAC class TrmE-Era-EngA-EngB-Septin-like GTPase superfamily. EngB GTPase family. Requires Mg(2+) as cofactor.

Its function is as follows. Necessary for normal cell division and for the maintenance of normal septation. The sequence is that of Probable GTP-binding protein EngB from Haloarcula marismortui (strain ATCC 43049 / DSM 3752 / JCM 8966 / VKM B-1809) (Halobacterium marismortui).